A 463-amino-acid chain; its full sequence is NEDD8-activating enzyme E1 catalytic subunit (463 aa).

The residue at position 2 (Ala2) is an N-acetylalanine. Residues 53–70 (HPDFEPSTESLQFLLDTC) form an interaction with UBE2M N-terminus region. ATP is bound by residues 100 to 124 (DMDTIDVSNLNRQFLFRPKDIGRPK) and 148 to 171 (IQDFNDTFYRQFHIIVCGLDSIIA). Interaction with UBE2M N-terminus regions lie at residues 157–161 (RQFHI) and 192–217 (PSSIVPLIDGGTEGFKGNARVILPGM). Residues 227–229 (LYP) form an interaction with NEDD8 region. Cys237 acts as the Glycyl thioester intermediate in catalysis. 2 interaction with NAE1 regions span residues 242–248 (MPRLPEH) and 292–295 (YNIR). The tract at residues 331–338 (IATSAYIP) is interaction with UBE2M N-terminus. The tract at residues 352 to 357 (YTYTFE) is interaction with NEDD8. Residues 368-463 (SQLPQNIQFS…TVLFKLHFTS (96 aa)) form an interaction with UBE2M core domain region.

It belongs to the ubiquitin-activating E1 family. UBA3 subfamily. In terms of assembly, heterodimer of UBA3 and NAE1. Interacts with NEDD8, UBE2F and UBE2M. Binds ESR1 and ESR2 with bound steroid ligand. Interacts with TBATA. As to expression, ubiquitously expressed.

It carries out the reaction ATP + [NEDD8 protein] + [E1 NEDD8-activating enzyme]-L-cysteine = AMP + diphosphate + [E1 NEDD8-activating enzyme]-S-[NEDD8 protein]-yl-L-cysteine.. The protein operates within protein modification; protein neddylation. Binding of TP53BP2 to the regulatory subunit NAE1 decreases activity. Functionally, catalytic subunit of the dimeric UBA3-NAE1 E1 enzyme. E1 activates NEDD8 by first adenylating its C-terminal glycine residue with ATP, thereafter linking this residue to the side chain of the catalytic cysteine, yielding a NEDD8-UBA3 thioester and free AMP. E1 finally transfers NEDD8 to the catalytic cysteine of UBE2M. Down-regulates steroid receptor activity. Necessary for cell cycle progression. This Homo sapiens (Human) protein is NEDD8-activating enzyme E1 catalytic subunit (UBA3).